The following is a 969-amino-acid chain: Alpha-glucosidase (969 aa).

The N-terminal stretch at 1-24 is a signal peptide; the sequence is MMISTAYQSLFLTALFSAISIAVG. N-linked (GlcNAc...) asparagine glycans are attached at residues Asn37, Asn67, Asn99, Asn116, Asn139, Asn146, Asn209, Asn245, Asn249, Asn331, Asn406, Asn429, Asn462, and Asn470. Asp481 functions as the Nucleophile in the catalytic mechanism. Glu484 is an active-site residue. 3 N-linked (GlcNAc...) asparagine glycosylation sites follow: Asn520, Asn523, and Asn589. Asp647 acts as the Proton donor in catalysis. Asn648, Asn801, Asn810, Asn821, Asn885, Asn915, Asn934, Asn942, Asn954, and Asn966 each carry an N-linked (GlcNAc...) asparagine glycan.

The protein belongs to the glycosyl hydrolase 31 family.

The protein resides in the secreted. The catalysed reaction is Hydrolysis of terminal, non-reducing (1-&gt;4)-linked alpha-D-glucose residues with release of alpha-D-glucose.. In terms of biological role, hydrolyzes malto-oligosaccharides, but has a low activity toward soluble starch. This chain is Alpha-glucosidase (agl1), found in Schizosaccharomyces pombe (strain 972 / ATCC 24843) (Fission yeast).